A 758-amino-acid chain; its full sequence is Probable serine/threonine-protein kinase HAL5-like (758 aa).

2 disordered regions span residues 1-170 (MGTV…SADD) and 189-252 (IDNA…HRGR). A compositionally biased stretch (polar residues) spans 22–57 (RSISGSIKSLFKPSSVQNSTPTVSPHESSPPLGNSD). Positions 58 to 69 (NLKKLVDTKRAE) are enriched in basic and acidic residues. Residues 129–153 (SSPRQSSSTNDRSSITSATSSVTSA) are compositionally biased toward low complexity. Positions 216-226 (DKNFESSEYEI) are enriched in basic and acidic residues. Positions 227–247 (RSNSLSRIHSTPQNESPTVNN) are enriched in polar residues. Residues 442–744 (KSMGVVLGHG…IDQLLQSPWM (303 aa)) form the Protein kinase domain. Residues 448 to 456 (LGHGAYGVV) and lysine 485 each bind ATP. The active-site Proton acceptor is aspartate 595.

Belongs to the protein kinase superfamily. CAMK Ser/Thr protein kinase family. NPR/HAL subfamily. HAL5 sub-subfamily.

The catalysed reaction is L-seryl-[protein] + ATP = O-phospho-L-seryl-[protein] + ADP + H(+). It carries out the reaction L-threonyl-[protein] + ATP = O-phospho-L-threonyl-[protein] + ADP + H(+). The protein is Probable serine/threonine-protein kinase HAL5-like of Vanderwaltozyma polyspora (strain ATCC 22028 / DSM 70294 / BCRC 21397 / CBS 2163 / NBRC 10782 / NRRL Y-8283 / UCD 57-17) (Kluyveromyces polysporus).